Reading from the N-terminus, the 446-residue chain is Methionine aminopeptidase 2-3 (446 aa).

Residues 14 to 116 are disordered; the sequence is ITDAGANGAD…ENRYRTTSEE (103 aa). Residues 61 to 76 show a composition bias toward basic residues; sequence AKKKKNKKRKPKKKQP. A compositionally biased stretch (polar residues) spans 86 to 96; it reads PLSQLFPNNSY. Basic and acidic residues predominate over residues 98-116; that stretch reads KGEEVEYKDENRYRTTSEE. Residue H199 coordinates substrate. Residues D219, D230, and H299 each coordinate a divalent metal cation. H307 is a substrate binding site. A divalent metal cation-binding residues include E332 and E427.

Belongs to the peptidase M24A family. Methionine aminopeptidase eukaryotic type 2 subfamily. Requires Co(2+) as cofactor. Zn(2+) serves as cofactor. The cofactor is Mn(2+). It depends on Fe(2+) as a cofactor.

The protein resides in the cytoplasm. It catalyses the reaction Release of N-terminal amino acids, preferentially methionine, from peptides and arylamides.. In terms of biological role, cotranslationally removes the N-terminal methionine from nascent proteins. The N-terminal methionine is often cleaved when the second residue in the primary sequence is small and uncharged (Met-Ala-, Cys, Gly, Pro, Ser, Thr, or Val). The protein is Methionine aminopeptidase 2-3 of Aspergillus fumigatus (strain CBS 144.89 / FGSC A1163 / CEA10) (Neosartorya fumigata).